Consider the following 430-residue polypeptide: Glutamate-1-semialdehyde 2,1-aminomutase (430 aa).

N6-(pyridoxal phosphate)lysine is present on K267.

This sequence belongs to the class-III pyridoxal-phosphate-dependent aminotransferase family. HemL subfamily. In terms of assembly, homodimer. Requires pyridoxal 5'-phosphate as cofactor.

It is found in the cytoplasm. The catalysed reaction is (S)-4-amino-5-oxopentanoate = 5-aminolevulinate. It functions in the pathway porphyrin-containing compound metabolism; protoporphyrin-IX biosynthesis; 5-aminolevulinate from L-glutamyl-tRNA(Glu): step 2/2. This Anaeromyxobacter dehalogenans (strain 2CP-C) protein is Glutamate-1-semialdehyde 2,1-aminomutase.